A 609-amino-acid polypeptide reads, in one-letter code: Threonine--tRNA ligase (609 aa).

The interval 215–506 is catalytic; that stretch reads DHRIIGNEMK…LIEHTAGELP (292 aa). 3 residues coordinate Zn(2+): C307, H358, and H483.

This sequence belongs to the class-II aminoacyl-tRNA synthetase family. As to quaternary structure, homodimer. It depends on Zn(2+) as a cofactor.

The protein resides in the cytoplasm. The catalysed reaction is tRNA(Thr) + L-threonine + ATP = L-threonyl-tRNA(Thr) + AMP + diphosphate + H(+). In terms of biological role, catalyzes the attachment of threonine to tRNA(Thr) in a two-step reaction: L-threonine is first activated by ATP to form Thr-AMP and then transferred to the acceptor end of tRNA(Thr). Also edits incorrectly charged L-seryl-tRNA(Thr). In Campylobacter hominis (strain ATCC BAA-381 / DSM 21671 / CCUG 45161 / LMG 19568 / NCTC 13146 / CH001A), this protein is Threonine--tRNA ligase.